The primary structure comprises 218 residues: Cytochrome b6 (218 aa).

A helical membrane pass occupies residues 35–55 (IFYCLGGITLVCFLIQFATGF). C38 serves as a coordination point for heme c. Heme b-binding residues include H89 and H103. 3 helical membrane passes run 93–113 (ASMMVLMLILHVFRVYLTGGF), 119–139 (LTWITGVVMAVITVAFGVTGY), and 189–209 (LHTFVMPWLLAVFMLMHFLMI). Heme b-binding residues include H190 and H205.

This sequence belongs to the cytochrome b family. PetB subfamily. As to quaternary structure, the 4 large subunits of the cytochrome b6-f complex are cytochrome b6, subunit IV (17 kDa polypeptide, PetD), cytochrome f and the Rieske protein, while the 4 small subunits are PetG, PetL, PetM and PetN. The complex functions as a dimer. Heme b serves as cofactor. Heme c is required as a cofactor.

The protein localises to the cellular thylakoid membrane. Functionally, component of the cytochrome b6-f complex, which mediates electron transfer between photosystem II (PSII) and photosystem I (PSI), cyclic electron flow around PSI, and state transitions. In Prochlorococcus marinus (strain NATL1A), this protein is Cytochrome b6.